We begin with the raw amino-acid sequence, 346 residues long: Ly6/PLAUR domain-containing protein 3 (346 aa).

The signal sequence occupies residues 1–30 (MDPARKAGAQAMIWTAGWLLLLLLRGGAQA). 2 consecutive UPAR/Ly6 domains span residues 33–126 (CYSC…ALDP) and 140–222 (CYSC…SRCN). N-linked (GlcNAc...) asparagine glycans are attached at residues Asn-118, Asn-163, Asn-176, and Asn-183. Residues 233–324 (PRIPPLVRLP…KGGPQQPHNK (92 aa)) are disordered. Over residues 234-246 (RIPPLVRLPPPEP) the composition is skewed to pro residues. Residues 247–269 (TTVASTTSVTTSTSAPVRPTSTT) show a composition bias toward low complexity. Positions 283 to 295 (GVEHEASRDEEPR) are enriched in basic and acidic residues. Cys-326 is lipidated: GPI-anchor amidated cysteine. Residues 327 to 346 (VAPTAGLAALLLAVAAGVLL) constitute a propeptide, removed in mature form.

In terms of assembly, binds laminin-1 and laminin-5. Interacts with LGALS3. Interacts with AGR2 and AGR3. N-glycosylated and O-glycosylated. In terms of tissue distribution, expressed in placenta, skin and urothelium. Found in suprabasal keratinocytes of chronic wounds. Weak expression is found in esophagus and peripheral blood mononuclear cells. Found in the majority of primary and metastatic transitional cell carcinomas (TCCs) and as well in breast cancer tissues, but not in adjacent normal tissues. High expression is found in the tumor component of some noninvasive superficial lesions and in invasive and metastatic urothelial cancers.

It is found in the cell membrane. Functionally, supports cell migration. May be involved in urothelial cell-matrix interactions. May be involved in tumor progression. The polypeptide is Ly6/PLAUR domain-containing protein 3 (LYPD3) (Homo sapiens (Human)).